Here is a 208-residue protein sequence, read N- to C-terminus: Dephospho-CoA kinase (208 aa).

The region spanning 5–201 is the DPCK domain; it reads IVALTGGIGS…QRYLALAASA (197 aa). 13-18 contributes to the ATP binding site; the sequence is GSGKST.

The protein belongs to the CoaE family.

The protein resides in the cytoplasm. It catalyses the reaction 3'-dephospho-CoA + ATP = ADP + CoA + H(+). It participates in cofactor biosynthesis; coenzyme A biosynthesis; CoA from (R)-pantothenate: step 5/5. Its function is as follows. Catalyzes the phosphorylation of the 3'-hydroxyl group of dephosphocoenzyme A to form coenzyme A. The sequence is that of Dephospho-CoA kinase from Sodalis glossinidius (strain morsitans).